A 179-amino-acid polypeptide reads, in one-letter code: Translation initiation factor IF-3 (179 aa).

Belongs to the IF-3 family. Monomer.

Its subcellular location is the cytoplasm. IF-3 binds to the 30S ribosomal subunit and shifts the equilibrium between 70S ribosomes and their 50S and 30S subunits in favor of the free subunits, thus enhancing the availability of 30S subunits on which protein synthesis initiation begins. This is Translation initiation factor IF-3 from Buchnera aphidicola subsp. Schizaphis graminum (strain Sg).